A 188-amino-acid polypeptide reads, in one-letter code: Pyridoxal 5'-phosphate synthase subunit PdxT (188 aa).

Position 46–48 (46–48) interacts with L-glutamine; the sequence is GES. The Nucleophile role is filled by cysteine 78. L-glutamine is bound by residues arginine 105 and 134 to 135; that span reads IR. Active-site charge relay system residues include histidine 170 and glutamate 172.

This sequence belongs to the glutaminase PdxT/SNO family. In the presence of PdxS, forms a dodecamer of heterodimers. Only shows activity in the heterodimer.

The enzyme catalyses aldehydo-D-ribose 5-phosphate + D-glyceraldehyde 3-phosphate + L-glutamine = pyridoxal 5'-phosphate + L-glutamate + phosphate + 3 H2O + H(+). It carries out the reaction L-glutamine + H2O = L-glutamate + NH4(+). It participates in cofactor biosynthesis; pyridoxal 5'-phosphate biosynthesis. Its function is as follows. Catalyzes the hydrolysis of glutamine to glutamate and ammonia as part of the biosynthesis of pyridoxal 5'-phosphate. The resulting ammonia molecule is channeled to the active site of PdxS. In Moorella thermoacetica (strain ATCC 39073 / JCM 9320), this protein is Pyridoxal 5'-phosphate synthase subunit PdxT.